A 129-amino-acid polypeptide reads, in one-letter code: Ribosome-binding factor A (129 aa).

Belongs to the RbfA family. In terms of assembly, monomer. Binds 30S ribosomal subunits, but not 50S ribosomal subunits or 70S ribosomes.

The protein resides in the cytoplasm. In terms of biological role, one of several proteins that assist in the late maturation steps of the functional core of the 30S ribosomal subunit. Associates with free 30S ribosomal subunits (but not with 30S subunits that are part of 70S ribosomes or polysomes). Required for efficient processing of 16S rRNA. May interact with the 5'-terminal helix region of 16S rRNA. This Thermomicrobium roseum (strain ATCC 27502 / DSM 5159 / P-2) protein is Ribosome-binding factor A.